The chain runs to 507 residues: GMP synthase [glutamine-hydrolyzing] (507 aa).

The Glutamine amidotransferase type-1 domain maps to 9-202 (TILIIDFGSQ…VHRIVGVKPG (194 aa)). Catalysis depends on Cys86, which acts as the Nucleophile. Catalysis depends on residues His176 and Glu178. A GMPS ATP-PPase domain is found at 203-395 (WTMGAYREQA…LGLPDSFIGR (193 aa)). Position 230–236 (230–236 (SGGVDSS)) interacts with ATP.

As to quaternary structure, homodimer.

It carries out the reaction XMP + L-glutamine + ATP + H2O = GMP + L-glutamate + AMP + diphosphate + 2 H(+). The protein operates within purine metabolism; GMP biosynthesis; GMP from XMP (L-Gln route): step 1/1. Functionally, catalyzes the synthesis of GMP from XMP. The chain is GMP synthase [glutamine-hydrolyzing] from Brucella melitensis biotype 1 (strain ATCC 23456 / CCUG 17765 / NCTC 10094 / 16M).